Reading from the N-terminus, the 970-residue chain is MNSLPPRPSLDVLPEALRPDLIRLLDDFESACARDGIALDHWPEALVRVWAGSGFAARIAIRRPNLLLELIQDGTLARPLEAGEMAARVSAVVQAAQDEAALMRDLRLLRQREMMRIAWRDLSGEAGLDETLGDLTDLAEHCIDQAAAWVHGQLVQRHGEPRDAEGRPQRLVVLGMGKLGGRELNFSSDVDLIFTYAARGETDGEKPLDNQQFFIRLGQRLIRLLDENTAEGFVFRVDMRLRPFGDAGPLVMDFDTLEGYYESHGREWERYALIKARVVAGDREAGRELMRALRPFVFRRYLDYGAFAALRDMKAMINREAARRSRGDDVKLGEGGIREVEFIGQAFQLIRAGRDPRLQLRGIRPVLRRLAEMELMPGYVVDQLITAYEFLRRTENHLQMAQDQQTHRLPESDEARLRLAFSMGHDDWEGFSRELARHRRRVQEHFQQVFAAPQGEAEEAAGAEGPGQAVLASIWAGDRSGERAQAVLAEAGFRDAPKALEWIEDLREGAACRSLTATGRERLDQLMPLLLGAAAGAEDPDTVLSRLVTLVRSIARRSVYLSLLVESPMALSQLVKLCDASPWIAQLLTRHPLLLDELLDPRSLYAPMDREGLSAELDEELSQVPEDDMEQMMDRLRQFQQVQMLKVAAADIMGVLPLMKVSDHLTWIAEVVLERVLSLVMAQLHARYGRPRCLIDGRPYEPGFAIIGYGKLGGLELGYGSDLDIVFLHDSAGEQQMTDGDKALDNSEFFARLGQRIVHVLGTYTGAGRLYEVDTRLRPSGASGLLVSSLKAFELYQETKAWTWEHQALVRARPVAGDAHIAEGFAEIRRRVLGICRDREKLRQEVREMREKMWSEHASRDPSRFNLKRDPGGIADIEFMVQYWVLAYACDHPPLLDYPDNIRILERLVVTGVLPEEDARFLTDTYREFRNRIHRLTLQESDAVVDAAEFAEQRETVRALWRRVMEEGKA.

The tract at residues 1 to 454 is adenylyl removase; the sequence is MNSLPPRPSL…HFQQVFAAPQ (454 aa). The interval 468 to 970 is adenylyl transferase; sequence QAVLASIWAG…WRRVMEEGKA (503 aa).

It belongs to the GlnE family. Mg(2+) serves as cofactor.

It carries out the reaction [glutamine synthetase]-O(4)-(5'-adenylyl)-L-tyrosine + phosphate = [glutamine synthetase]-L-tyrosine + ADP. It catalyses the reaction [glutamine synthetase]-L-tyrosine + ATP = [glutamine synthetase]-O(4)-(5'-adenylyl)-L-tyrosine + diphosphate. Functionally, involved in the regulation of glutamine synthetase GlnA, a key enzyme in the process to assimilate ammonia. When cellular nitrogen levels are high, the C-terminal adenylyl transferase (AT) inactivates GlnA by covalent transfer of an adenylyl group from ATP to specific tyrosine residue of GlnA, thus reducing its activity. Conversely, when nitrogen levels are low, the N-terminal adenylyl removase (AR) activates GlnA by removing the adenylyl group by phosphorolysis, increasing its activity. The regulatory region of GlnE binds the signal transduction protein PII (GlnB) which indicates the nitrogen status of the cell. The protein is Bifunctional glutamine synthetase adenylyltransferase/adenylyl-removing enzyme of Thioalkalivibrio sulfidiphilus (strain HL-EbGR7).